Here is a 521-residue protein sequence, read N- to C-terminus: Bifunctional purine biosynthesis protein PurH (521 aa).

The region spanning 1 to 145 is the MGS-like domain; sequence MIKQALISVS…KNHRDVTVVV (145 aa).

Belongs to the PurH family.

It catalyses the reaction (6R)-10-formyltetrahydrofolate + 5-amino-1-(5-phospho-beta-D-ribosyl)imidazole-4-carboxamide = 5-formamido-1-(5-phospho-D-ribosyl)imidazole-4-carboxamide + (6S)-5,6,7,8-tetrahydrofolate. It carries out the reaction IMP + H2O = 5-formamido-1-(5-phospho-D-ribosyl)imidazole-4-carboxamide. It participates in purine metabolism; IMP biosynthesis via de novo pathway; 5-formamido-1-(5-phospho-D-ribosyl)imidazole-4-carboxamide from 5-amino-1-(5-phospho-D-ribosyl)imidazole-4-carboxamide (10-formyl THF route): step 1/1. The protein operates within purine metabolism; IMP biosynthesis via de novo pathway; IMP from 5-formamido-1-(5-phospho-D-ribosyl)imidazole-4-carboxamide: step 1/1. This Paraburkholderia phytofirmans (strain DSM 17436 / LMG 22146 / PsJN) (Burkholderia phytofirmans) protein is Bifunctional purine biosynthesis protein PurH.